The sequence spans 393 residues: Phosphoglycerate kinase (393 aa).

Residues D22 to N24, R37, H60 to R63, R119, and R152 each bind substrate. Residues K202, G293, E324, and G350–S353 contribute to the ATP site.

This sequence belongs to the phosphoglycerate kinase family. As to quaternary structure, monomer.

The protein resides in the cytoplasm. It carries out the reaction (2R)-3-phosphoglycerate + ATP = (2R)-3-phospho-glyceroyl phosphate + ADP. It functions in the pathway carbohydrate degradation; glycolysis; pyruvate from D-glyceraldehyde 3-phosphate: step 2/5. The protein is Phosphoglycerate kinase of Borreliella afzelii (strain PKo) (Borrelia afzelii).